Reading from the N-terminus, the 210-residue chain is Thymidylate kinase (210 aa).

9–16 contacts ATP; it reads GLEGAGKS.

It belongs to the thymidylate kinase family.

The enzyme catalyses dTMP + ATP = dTDP + ADP. Functionally, phosphorylation of dTMP to form dTDP in both de novo and salvage pathways of dTTP synthesis. The protein is Thymidylate kinase of Aliivibrio fischeri (strain ATCC 700601 / ES114) (Vibrio fischeri).